Consider the following 221-residue polypeptide: Tetraspanin-2 (221 aa).

Over 1 to 13 (MGRFRGGLRCIKY) the chain is Cytoplasmic. A helical membrane pass occupies residues 14 to 34 (LLLGFNLLFWLAGSAVIAFGL). Topologically, residues 35 to 54 (WFRFGGAIKELSSEDKSPEY) are extracellular. Residues 55–75 (FYVGLYVLVGAGALMMAVGFF) form a helical membrane-spanning segment. Residues 76 to 90 (GCCGAMRESQCVLGS) lie on the Cytoplasmic side of the membrane. The helical transmembrane segment at 91–111 (FFTCLLVIFAAEVTTGVFAFI) threads the bilayer. The Extracellular portion of the chain corresponds to 112–188 (GKGVAIRHVQ…ETIISVKLQL (77 aa)). An N-linked (GlcNAc...) asparagine glycan is attached at N139. The chain crosses the membrane as a helical span at residues 189–209 (IGIVGIGIAGLTIFGMIFSMV). Topologically, residues 210 to 221 (LCCAIRNSRDVI) are cytoplasmic.

The protein belongs to the tetraspanin (TM4SF) family.

The protein resides in the membrane. In terms of biological role, may play a role in signalling in oligodendrocytes in the early stages of their terminal differentiation into myelin-forming glia and may also function in stabilizing the mature sheath. The protein is Tetraspanin-2 (TSPAN2) of Homo sapiens (Human).